The primary structure comprises 360 residues: Tyrosine-protein phosphatase non-receptor type 7 (360 aa).

A disordered region spans residues 1–37; the sequence is MVQAHGGRSRAQPLTLSLGAAMTQPPPEKTPAKKHVR. Residues 38–51 form an interaction with MAP kinases region; that stretch reads LQERRGSNVALMLD. S44 carries the post-translational modification Phosphoserine. Position 66 is a phosphothreonine (T66). Residues S93, S110, and S143 each carry the phosphoserine modification. Residues 97 to 350 form the Tyrosine-protein phosphatase domain; the sequence is LEEEFLKIPS…QFLHHTLALY (254 aa). Substrate-binding positions include D257, 291 to 297, and Q335; that span reads CSAGIGR. Residue C291 is the Phosphocysteine intermediate of the active site. Residue C291 is modified to Cysteine sulfenic acid (-SOH).

This sequence belongs to the protein-tyrosine phosphatase family. Non-receptor class subfamily. Monomer. Interacts with MAPK1, MAPK3 and several other MAP kinases. Phosphorylated on serine residues in resting T-cells. Phosphorylation increases upon exposure to stimuli that increase intracellular cAMP levels. Phosphorylation leads to dissociation of bound MAP kinases. Post-translationally, oxidized at active site cysteine. Treatment with pervanadate (vanadate and H(2)O(2)) or with antigen enhanced oxidation of active site cysteine. As to expression, expressed exclusively in thymus and spleen.

Its subcellular location is the cytoplasm. It is found in the cytoskeleton. It catalyses the reaction O-phospho-L-tyrosyl-[protein] + H2O = L-tyrosyl-[protein] + phosphate. Inhibited in cells after FCER1A triggering. Its function is as follows. Protein phosphatase that acts preferentially on tyrosine-phosphorylated MAPK1. Plays a role in the regulation of T and B-lymphocyte development and signal transduction. The chain is Tyrosine-protein phosphatase non-receptor type 7 (PTPN7) from Homo sapiens (Human).